The following is a 256-amino-acid chain: Small ribosomal subunit protein eS1B (256 aa).

Ala-2 carries the N-acetylalanine; partial modification.

It belongs to the eukaryotic ribosomal protein eS1 family. As to quaternary structure, component of the small ribosomal subunit. Mature ribosomes consist of a small (40S) and a large (60S) subunit. The 40S subunit contains about 33 different proteins and 1 molecule of RNA (18S). The 60S subunit contains about 49 different proteins and 3 molecules of RNA (25S, 5.8S and 5S).

Its subcellular location is the cytoplasm. The chain is Small ribosomal subunit protein eS1B from Clavispora lusitaniae (strain ATCC 42720) (Yeast).